Reading from the N-terminus, the 727-residue chain is Glucans biosynthesis glucosyltransferase H (727 aa).

Residues 18 to 45 are disordered; it reads SAMPNERPGAMEPQSLTEMPEGFPRRST. Helical transmembrane passes span 58-78, 90-110, 278-298, 408-428, 460-480, 496-516, and 572-592; these read FFVVGGALLLSSFAIYEMGAV, LVLLLFAINFCWIALAFCSGI, LQQFAARIYGPVIGTGLGWWV, IMAYLSSPFWLLLILTGLMLA, LFYITMGVLFGPKIFGVLLLL, IFSVLFEVVLSALIAPIMMFI, and LLAWMSPALIGLWFAVPISAW.

This sequence belongs to the glycosyltransferase 2 family. OpgH subfamily.

The protein localises to the cell inner membrane. The protein operates within glycan metabolism; osmoregulated periplasmic glucan (OPG) biosynthesis. Functionally, involved in the biosynthesis of osmoregulated periplasmic glucans (OPGs). The chain is Glucans biosynthesis glucosyltransferase H from Shewanella putrefaciens (strain CN-32 / ATCC BAA-453).